Consider the following 143-residue polypeptide: Large ribosomal subunit protein uL11 (143 aa).

The protein belongs to the universal ribosomal protein uL11 family. As to quaternary structure, part of the ribosomal stalk of the 50S ribosomal subunit. Interacts with L10 and the large rRNA to form the base of the stalk. L10 forms an elongated spine to which L12 dimers bind in a sequential fashion forming a multimeric L10(L12)X complex. Post-translationally, one or more lysine residues are methylated.

Forms part of the ribosomal stalk which helps the ribosome interact with GTP-bound translation factors. The sequence is that of Large ribosomal subunit protein uL11 from Polynucleobacter necessarius subsp. necessarius (strain STIR1).